We begin with the raw amino-acid sequence, 372 residues long: M protein, serotype 2.2 (372 aa).

Positions 1-41 are cleaved as a signal peptide; the sequence is MARQQTKKNYSLRKLKTGTASVAVALTVLGAGFANQTEVRA. 3 C repeats span residues 124 to 158, 166 to 200, and 215 to 249; these read AKTT…EAKH, KKLT…EAKY, and QKLE…TSEL. 3 stretches are compositionally biased toward basic and acidic residues: residues 125–169, 226–246, and 260–274; these read KTTK…KKLT, TSRK…KKVT, and EESK…AELQ. 2 disordered regions span residues 125–191 and 211–274; these read KTTK…ASRA and EAKH…AELQ. D repeat units lie at residues 275–280, 281–286, 289–294, and 296–301; these read AKLDAQ, GKALKE, AKQTEE, and AKLRAE. Residues 295–304 are compositionally biased toward basic and acidic residues; the sequence is LAKLRAEKAA. The interval 295–344 is disordered; it reads LAKLRAEKAAGSKTPATKPANKERSGRAAQTATRPSQNKGMRSQLPSTGE. Residues 322 to 341 show a composition bias toward polar residues; it reads AAQTATRPSQNKGMRSQLPS. The short motif at 339 to 343 is the LPXTG sorting signal element; it reads LPSTG. Thr-342 is modified (pentaglycyl murein peptidoglycan amidated threonine). The propeptide at 343–372 is removed by sortase; the sequence is GEAANPFFTAAAATVMVSAGMLALKRKEEN.

This sequence belongs to the M protein family.

It is found in the secreted. It localises to the cell wall. In terms of biological role, this protein is one of the different antigenic serotypes of protein M. Protein M is closely associated with virulence of the bacterium and can render the organism resistant to phagocytosis. The sequence is that of M protein, serotype 2.2 (emmL2.2) from Streptococcus pyogenes.